We begin with the raw amino-acid sequence, 53 residues long: Large ribosomal subunit protein bL33B (53 aa).

Belongs to the bacterial ribosomal protein bL33 family.

The chain is Large ribosomal subunit protein bL33B from Sorangium cellulosum (strain So ce56) (Polyangium cellulosum (strain So ce56)).